Reading from the N-terminus, the 510-residue chain is Gelatinase (510 aa).

The first 30 residues, 1–30, serve as a signal peptide directing secretion; sequence MMKGNKILYILGTGIFVGSSCLFSSLFVAA. A propeptide spanning residues 31-192 is cleaved from the precursor; it reads EEQVYSESEV…IMEKQDLTEH (162 aa). Asp324 is a binding site for Ca(2+). Position 328 (His328) interacts with Zn(2+). Glu329 is an active-site residue. Zn(2+) contacts are provided by His332 and Glu352. Ser376 contributes to the Ca(2+) binding site. His419 (proton donor) is an active-site residue.

This sequence belongs to the peptidase M4 family.

The protein localises to the secreted. It catalyses the reaction Preferential cleavage: Xaa-|-Leu, Xaa-|-Phe, Xaa-|-Tyr, Xaa-|-Ala.. With respect to regulation, inhibited by L-leucine hydroxamate and phosphoramidon. Not inhibited by phenylmethanesulfonyl fluoride. Reversibly inactivated by straight-chain aliphatic alcohols. In terms of biological role, metalloprotease capable of the hydrolysis of insoluble hydrophobic substrates. Hydrolyzes azocoll and gelatin and, at a lower rate, soluble and insoluble collagens. Does not cleave short synthetic peptides. Preferentially hydrolyzes the 24-Phe-|-Phe-25 bond in the insulin B-chain, followed by the 5-His-|-Leu-6 bond. Inactivates endothelin-1, primarily by cleavage of the 5-Ser-|-Leu-6 and 16-His-|-Leu-17 bonds. Hydrolyzes the alpha chain of C3 to generate a C3b-like protein. Inhibits complement-mediated hemolysis and opsinization of bacteria. Hydrolyzes the insect antimicrobial peptide cecropin. Decreases the length of E.faecalis chains via the activation of autolysin. Degrades polymerized fibrin. The protein is Gelatinase of Enterococcus faecalis (strain ATCC 700802 / V583).